The sequence spans 1819 residues: Non-reducing polyketide synthase 8 (1819 aa).

One can recognise a Starter acyltransferase (SAT) domain in the interval 38–265 (QLTLLSKQKQ…QKIINLPVYG (228 aa)). The 436-residue stretch at 405–840 (KSSIAIVGMS…GGNTMIAIEE (436 aa)) folds into the Ketosynthase family 3 (KS3) domain. Residues Cys-578, His-714, and His-758 each act as for beta-ketoacyl synthase activity in the active site. In terms of domain architecture, Malonyl-CoA:ACP transacylase (MAT) spans 943 to 1262 (FAFTGQGASY…SLSTLHCAGA (320 aa)). Positions 1336–1476 (QRIIEESFDG…GDRSAWLSSW (141 aa)) are N-terminal hotdog fold. The PKS/mFAS DH domain maps to 1336-1646 (QRIIEESFDG…FRQYPRILLN (311 aa)). Catalysis depends on His-1368, which acts as the Proton acceptor; for dehydratase activity. Residues 1404–1642 (AMNVADLEVV…GGIKFRQYPR (239 aa)) form a dehydratase (DH) domain region. The segment at 1498–1646 (IANRLSHNMA…FRQYPRILLN (149 aa)) is C-terminal hotdog fold. The active-site Proton donor; for dehydratase activity is Asp-1557. The Carrier domain occupies 1741 to 1818 (VDTNSVASKA…DLRSWLMEYY (78 aa)). Position 1778 is an O-(pantetheine 4'-phosphoryl)serine (Ser-1778).

Pantetheine 4'-phosphate is required as a cofactor.

It functions in the pathway secondary metabolite biosynthesis. Functionally, non-reducing polyketide synthase; part of the gene cluster that mediates the biosynthesis of dibenzodioxocinones such as pestalotiollide B, a novel class of inhibitors against cholesterol ester transfer protein (CEPT). The biosynthesis initiates from condensation of acetate and malonate units catalyzed by the non-reducing PKS pks8/GME11356. Pks8/GME11356 lacks a thioesterase (TE) domain, which is important to the cyclizing of the third ring of atrochrysone carboxylic acid, and the esterase GME11355 might play the role of TE and catalyzes the cyclization reaction of the C ring. The lactamase-like protein GME11357 (or other beta-lactamases in Pestalotiopsis microspora) probably hydrolyzes the thioester bond between the ACP of pks8/GME11356 and the intermediate to release atrochrysone carboxylic acid, which is spontaneously dehydrates to form endocrocin anthrone. Endocrocin anthrone is further converted to emodin via the endocrocin intermediate. Emodin is then oxidized by several enzymes such as the Baeyer-Villiger oxidase GME11358, the oxidoreductase GME11367, the short chain dehydrogenase/reductase GME11373, as well as by other oxidoreductases from the cluster, to modify the A and C rings and open the B ring, and finally yield monodictyphenone. The prenyltransferase GME11375 may catalyze the addition reaction between the C5 side chains and the carbon bone of dibenzodioxocinones. The remaining biochemical reactions to the final product dibenzodioxocinones should be methylation catalyzed by methyltransferase GME11366 and reduction and lactonization reaction catalyzed by a series of oxidordeuctases. This Pestalotiopsis microspora protein is Non-reducing polyketide synthase 8.